Here is a 285-residue protein sequence, read N- to C-terminus: Pantothenate synthetase (285 aa).

30 to 37 (MGFLHEGH) is a binding site for ATP. The active-site Proton donor is His-37. Gln-61 is a (R)-pantoate binding site. Gln-61 is a beta-alanine binding site. 147–150 (GQKD) is a binding site for ATP. Gln-153 is a binding site for (R)-pantoate. ATP contacts are provided by residues Val-176 and 184–187 (KSSR).

Belongs to the pantothenate synthetase family. In terms of assembly, homodimer.

It localises to the cytoplasm. The catalysed reaction is (R)-pantoate + beta-alanine + ATP = (R)-pantothenate + AMP + diphosphate + H(+). It participates in cofactor biosynthesis; (R)-pantothenate biosynthesis; (R)-pantothenate from (R)-pantoate and beta-alanine: step 1/1. Catalyzes the condensation of pantoate with beta-alanine in an ATP-dependent reaction via a pantoyl-adenylate intermediate. The sequence is that of Pantothenate synthetase from Listeria monocytogenes serotype 4b (strain F2365).